Here is a 91-residue protein sequence, read N- to C-terminus: Small nuclear ribonucleoprotein F (91 aa).

A Sm domain is found at 8–81; the sequence is APKPFLYDLK…VLFVRGIDDE (74 aa).

The protein belongs to the snRNP Sm proteins family. SmF/LSm6 subfamily. Core component of the spliceosomal U1, U2, U4 and U5 small nuclear ribonucleoproteins (snRNPs), the building blocks of the spliceosome. Most spliceosomal snRNPs contain a common set of Sm proteins, SNRPB, SNRPD1, SNRPD2, SNRPD3, SNRPE, SNRPF and SNRPG that assemble in a heptameric protein ring on the Sm site of the small nuclear RNA to form the core snRNP. Component of the U1 snRNP. Component of the U4/U6-U5 tri-snRNP complex. Component of the U7 snRNP complex. Component of the U11/U12 snRNPs that are part of the U12-type spliceosome. Part of the SMN-Sm complex that catalyzes core snRNPs assembly.

The protein localises to the cytoplasm. It is found in the cytosol. Its subcellular location is the nucleus. Plays a role in pre-mRNA splicing as a core component of the spliceosomal U1, U2, U4 and U5 small nuclear ribonucleoproteins (snRNPs), the building blocks of the spliceosome. Component of both the pre-catalytic spliceosome B complex and activated spliceosome C complexes. Is also a component of the minor U12 spliceosome. In Dictyostelium discoideum (Social amoeba), this protein is Small nuclear ribonucleoprotein F (snrpf).